A 57-amino-acid chain; its full sequence is MAVPKRRTSKARKRKRRTHWKLKSPNLVECPQCHELKLSHRVCPSCGYYKGREVVSK.

Belongs to the bacterial ribosomal protein bL32 family.

The polypeptide is Large ribosomal subunit protein bL32 (Halothermothrix orenii (strain H 168 / OCM 544 / DSM 9562)).